The chain runs to 519 residues: Amphoterin-induced protein 2 (519 aa).

The signal sequence occupies residues 1 to 38 (MSLRFHTLPTLPRAVKPGCRELLCLLVIAVMVSPSASG). Residues 39–67 (MCPTACICATDIVSCTNKNLSKVPGNLFR) enclose the LRRNT domain. Over 39 to 397 (MCPTACICAT…RSHAHEAFNT (359 aa)) the chain is Extracellular. Intrachain disulfides connect cysteine 40-cysteine 46 and cysteine 44-cysteine 53. Asparagine 57 carries an N-linked (GlcNAc...) asparagine glycan. LRR repeat units lie at residues 68–89 (LIKR…WIPV), 93–114 (KLST…SFST), 117–138 (NLKC…TFQE), 141–162 (ALEV…AFGG), 165–186 (HLQK…LYTG), and 192–213 (DLTF…HINL). N-linked (GlcNAc...) asparagine glycosylation is present at asparagine 103. The 57-residue stretch at 227–283 (NPFVCDCSLYSLLIFWYRRHFSSVMDFKNDYTCRLWSDSRHSHQLQLLQESFLNCSY) folds into the LRRCT domain. 2 disulfide bridges follow: cysteine 231–cysteine 259 and cysteine 233–cysteine 281. 7 N-linked (GlcNAc...) asparagine glycosylation sites follow: asparagine 280, asparagine 287, asparagine 344, asparagine 372, asparagine 380, asparagine 383, and asparagine 387. The 91-residue stretch at 288-378 (GSFHALGFIH…RLLNETVDIM (91 aa)) folds into the Ig-like C2-type domain. Cysteine 309 and cysteine 362 are oxidised to a cystine. A helical membrane pass occupies residues 398–418 (AFTTLAACVASIVLVLLYLYL). Over 419–519 (TPCPCKCKAK…FSDTPFVAST (101 aa)) the chain is Cytoplasmic. A disordered region spans residues 498–519 (RAKSDSDSVNSVFSDTPFVAST).

The protein belongs to the immunoglobulin superfamily. AMIGO family. Binds itself as well as AMIGO1 and AMIGO3. As to expression, highest level in cerebellum, retina, liver, and lung. Lower levels in cerebrum, kidney, small intestine, spleen and testis.

Its subcellular location is the cell membrane. The protein localises to the nucleus. Its function is as follows. Required for depolarization-dependent survival of cultured cerebellar granule neurons. May mediate homophilic as well as heterophilic cell-cell interaction with AMIGO1 or AMIGO3. May contribute to signal transduction through its intracellular domain. This is Amphoterin-induced protein 2 from Mus musculus (Mouse).